The sequence spans 227 residues: Nitrobenzene nitroreductase (227 aa).

14-18 provides a ligand contact to FMN; that stretch reads RRAKR. Residues Ser44 and Ile109 each contribute to the NADP(+) site. FMN contacts are provided by residues 172–173 and Lys215; that span reads VF.

It belongs to the nitroreductase family. As to quaternary structure, monomer. Requires FMN as cofactor.

It catalyses the reaction N-phenylhydroxylamine + 2 NADP(+) + H2O = nitrobenzene + 2 NADPH + 2 H(+). It participates in xenobiotic degradation; nitrobenzene degradation. Inhibited by dicumarol, p-hydroxymercuribenzoate and salicyl hydroxamate. In terms of biological role, involved in the biodegradation of nitroaromatic compounds. Catalyzes the two-electron reduction of nitrobenzene (NB) to produce a nitrosobenzene (NOB) intermediate, which is immediately reduced to hydroxylaminobenzene (HAB) by a second two-electron transfer. Also active on menadione and nitrofurazone. Replacing NADPH with NADH results in a 4-fold decrease in the reaction rate. The protein is Nitrobenzene nitroreductase of Ectopseudomonas oleovorans (Pseudomonas oleovorans).